Reading from the N-terminus, the 442-residue chain is Cyclin-A1-2 (442 aa).

2 stretches are compositionally biased toward polar residues: residues 1–12 (MSSSSRNLSQEN) and 39–63 (ITNQ…NKIG). The segment at 1–72 (MSSSSRNLSQ…GQSKKAPKPA (72 aa)) is disordered.

It belongs to the cyclin family. Cyclin AB subfamily. As to quaternary structure, interacts with CDC20-1, CDC20-2, FZR2/CCS52A1 and FZR1/CCS52A2. Expressed in roots, stems and flowers.

It localises to the cytoplasm. The protein localises to the nucleus. In terms of biological role, involved in the regulation of male meiosis progression. This is Cyclin-A1-2 (CYCA1-2) from Arabidopsis thaliana (Mouse-ear cress).